A 248-amino-acid polypeptide reads, in one-letter code: Myelin protein P0 (248 aa).

A signal peptide spans 1 to 29 (MAPGAPSSSPSPILAALLFSSLVLSPALA). An Ig-like V-type domain is found at 30–143 (IVVYTDREIY…DIVGKTSQVT (114 aa)). Residues 30 to 153 (IVVYTDREIY…LYVFEKVPTR (124 aa)) lie on the Extracellular side of the membrane. An intrachain disulfide couples C50 to C127. Residue N122 is glycosylated (N-linked (GlcNAc...) (complex) asparagine). The chain crosses the membrane as a helical span at residues 154–179 (YGVVLGAVIGGILGVVLLLLLLFYLI). Residues 180–248 (RYCWLRRQAA…GLGESRKDKK (69 aa)) lie on the Cytoplasmic side of the membrane. S210 carries the phosphoserine; by PKC modification. Residues 222–248 (MLDHSRSTKAASEKKSKGLGESRKDKK) form a disordered region. Over residues 224–248 (DHSRSTKAASEKKSKGLGESRKDKK) the composition is skewed to basic and acidic residues. A phosphoserine mark is found at S226 and S228. S233 is subject to Phosphoserine; by PKC. Phosphoserine occurs at positions 237 and 243.

Belongs to the myelin P0 protein family. Homodimer and homotetramer. Post-translationally, N-glycosylated; contains sulfate-substituted glycan. In terms of tissue distribution, found only in peripheral nervous system Schwann cells.

It localises to the cell membrane. Is an adhesion molecule necessary for normal myelination in the peripheral nervous system. It mediates adhesion between adjacent myelin wraps and ultimately drives myelin compaction. The chain is Myelin protein P0 (Mpz) from Mus musculus (Mouse).